Reading from the N-terminus, the 144-residue chain is MRLNELAPEPGSRPSAKRVGRGIGSGLGKTGGRGHKGLKSRSGGSVAPGFEGGQQPLARRLPKFGFTSRQQRYVAEIRLNELAKVEGDVVDLAALKKADIIREEIREAKVILSGELDRAVTVKGLRVTKGAREAITAAGGKVED.

The tract at residues 1-58 (MRLNELAPEPGSRPSAKRVGRGIGSGLGKTGGRGHKGLKSRSGGSVAPGFEGGQQPLA) is disordered. Residues 21–31 (RGIGSGLGKTG) are compositionally biased toward gly residues.

Belongs to the universal ribosomal protein uL15 family. Part of the 50S ribosomal subunit.

Binds to the 23S rRNA. The sequence is that of Large ribosomal subunit protein uL15 from Marinobacter nauticus (strain ATCC 700491 / DSM 11845 / VT8) (Marinobacter aquaeolei).